A 226-amino-acid chain; its full sequence is Ribonuclease 3 (226 aa).

In terms of domain architecture, RNase III spans 6–128 (INRLQRKLGY…LIGGVFLDSN (123 aa)). A Mg(2+)-binding site is contributed by Glu41. Asp45 is a catalytic residue. Asp114 and Glu117 together coordinate Mg(2+). Glu117 is an active-site residue. Residues 155-225 (DPKTRLQEYL…AEQVLKKLEL (71 aa)) form the DRBM domain.

Belongs to the ribonuclease III family. In terms of assembly, homodimer. Mg(2+) serves as cofactor.

It is found in the cytoplasm. The enzyme catalyses Endonucleolytic cleavage to 5'-phosphomonoester.. Digests double-stranded RNA. Involved in the processing of primary rRNA transcript to yield the immediate precursors to the large and small rRNAs (23S and 16S). Processes some mRNAs, and tRNAs when they are encoded in the rRNA operon. Processes pre-crRNA and tracrRNA of type II CRISPR loci if present in the organism. The sequence is that of Ribonuclease 3 from Salmonella choleraesuis (strain SC-B67).